Consider the following 322-residue polypeptide: Pyrroline-5-carboxylate reductase (322 aa).

2 helical membrane passes run 9 to 29 and 117 to 137; these read YPNV…VGLL and ILIS…LHFW. The interval 302–322 is disordered; it reads LSQSAGSHGEDNTTDSKTSRA. Asparagine 313 is a glycosylation site (N-linked (GlcNAc...) asparagine).

The protein belongs to the pyrroline-5-carboxylate reductase family.

It is found in the membrane. It carries out the reaction L-proline + NADP(+) = (S)-1-pyrroline-5-carboxylate + NADPH + 2 H(+). It catalyses the reaction L-proline + NAD(+) = (S)-1-pyrroline-5-carboxylate + NADH + 2 H(+). It participates in alkaloid biosynthesis. Pyrroline-5-carboxylate reductase; part of the gene cluster that mediates the biosynthesis of paraherquamide, a fungal indole alkaloid that belongs to a family of natural products containing a characteristic bicyclo[2.2.2]diazaoctane core. The first steps in the biosynthesis of paraherquamide is the production of the beta-methyl-proline precursor from L-isoleucine. They require oxidation of a terminally hydroxylated L-isoleucine to the corresponding aldehyde by enzymes which have still to be identified. Spontaneous cyclization and dehydration would yield the 4-methyl pyrolline-5-carboxylic acid, which is then reduced by the pyrroline-5-carboxylate reductase phqD leading to the beta-methyl-proline precursor. The next step of paraherquamide biosynthesis involves coupling of beta-methyl-proline and L-tryptophan by the bimodular NRPS phqB, to produce a monooxopiperazine intermediate. The reductase (R) domain of phqB utilizes NADPH for hydride transfer to reduce the thioester bond of the T domain-tethered linear dipeptide to a hemithioaminal intermediate, which spontaneously cleaves the C-S bond to release the aldehyde product. This compound undergoes spontaneous cyclization and dehydration to give a dienamine which is reverse prenylated at C-2 by the reverse prenyltransferase phqJ. The other prenyltransferase present in the cluster, phqI may be a redundant gene in the pathway. During biosynthetic assembly, the key step to produce the polycyclic core is catalyzed by the bifunctional reductase and intramolecular [4+2] Diels-Alderase, phqE, resulting in formation of the [2.2.2] diazaoctane intermediate preparaherquamide. Following formation of preparaherquamide, an indole 2,3-epoxidation-initiated pinacol-like rearrangement is catalyzed by the phqK FAD-dependent monooxygenase. The prenyltransferase phqA, the cytochrome P450 monooxygenase phqL, and the FAD-linked oxidoreductase phqH (or the cytochrome P450 monooxygenase phqM), are proposed to be involved in the formation of the pyran ring. The FAD-dependent monooxygenase phqK is likely responsible for generation of the spiro-oxindole, and the N-methylation is likely mediated by the phqN methyltransferase leading to the isolable natural product paraherquamide F. However, the order of these biosynthetic steps has still to be determined. In late-stage paraherquamide biosynthesis, the third P450 monooxygenase, phqO, is probably responsible for the C-14 hydroxylation, transforming paraherquamide F to paraherquamide G, and paraherquamide E to the final product paraherquamide A. The expansion from the 6-membered ring pyran (in paraherquamides F and G) to the 7-membered dioxepin ring (in paraherquamides A and E) represents a poorly understood but intriguing process that probably involves the 2-oxoglutarate-dependent dioxygenase phqC. Finally, the remaining members of the paraherquamide cluster, including phqI as well as phqM (or phqH), do not have a clearly prescribed role and appear to be redundant. The chain is Pyrroline-5-carboxylate reductase from Penicillium fellutanum.